We begin with the raw amino-acid sequence, 258 residues long: Imidazole glycerol phosphate synthase subunit HisF (258 aa).

Active-site residues include D11 and D130.

This sequence belongs to the HisA/HisF family. As to quaternary structure, heterodimer of HisH and HisF.

It localises to the cytoplasm. The enzyme catalyses 5-[(5-phospho-1-deoxy-D-ribulos-1-ylimino)methylamino]-1-(5-phospho-beta-D-ribosyl)imidazole-4-carboxamide + L-glutamine = D-erythro-1-(imidazol-4-yl)glycerol 3-phosphate + 5-amino-1-(5-phospho-beta-D-ribosyl)imidazole-4-carboxamide + L-glutamate + H(+). It participates in amino-acid biosynthesis; L-histidine biosynthesis; L-histidine from 5-phospho-alpha-D-ribose 1-diphosphate: step 5/9. In terms of biological role, IGPS catalyzes the conversion of PRFAR and glutamine to IGP, AICAR and glutamate. The HisF subunit catalyzes the cyclization activity that produces IGP and AICAR from PRFAR using the ammonia provided by the HisH subunit. The sequence is that of Imidazole glycerol phosphate synthase subunit HisF from Serratia proteamaculans (strain 568).